Consider the following 351-residue polypeptide: Biotin synthase (351 aa).

The region spanning 44–262 (NRVQVSTLLS…LAVARILMPQ (219 aa)) is the Radical SAM core domain. [4Fe-4S] cluster contacts are provided by cysteine 59, cysteine 63, and cysteine 66. [2Fe-2S] cluster-binding residues include cysteine 103, cysteine 134, cysteine 194, and arginine 266.

Belongs to the radical SAM superfamily. Biotin synthase family. In terms of assembly, homodimer. Requires [4Fe-4S] cluster as cofactor. It depends on [2Fe-2S] cluster as a cofactor.

It catalyses the reaction (4R,5S)-dethiobiotin + (sulfur carrier)-SH + 2 reduced [2Fe-2S]-[ferredoxin] + 2 S-adenosyl-L-methionine = (sulfur carrier)-H + biotin + 2 5'-deoxyadenosine + 2 L-methionine + 2 oxidized [2Fe-2S]-[ferredoxin]. The protein operates within cofactor biosynthesis; biotin biosynthesis; biotin from 7,8-diaminononanoate: step 2/2. Functionally, catalyzes the conversion of dethiobiotin (DTB) to biotin by the insertion of a sulfur atom into dethiobiotin via a radical-based mechanism. This is Biotin synthase from Pseudomonas fluorescens (strain Pf0-1).